The chain runs to 81 residues: Small cysteine-rich protein 4 (81 aa).

The N-terminal stretch at 1–23 (MDTKVACLLLIILGALTVQGAVS) is a signal peptide. Positions 24-25 (GN) are excised as a propeptide.

This sequence belongs to the Cnidaria small cysteine-rich protein (SCRiP) family. beta subfamily. Post-translationally, contains 4 disulfide bonds.

The protein resides in the secreted. Its subcellular location is the nematocyst. Its function is as follows. Induces neurotoxic symptoms on zebrafish. Has also been claimed to be implied in calcification, but tests on homolog proteins suggest that proteins of this family have a neurotoxic function and not a calcification function. The protein is Small cysteine-rich protein 4 of Orbicella faveolata (Mountainous star coral).